The chain runs to 202 residues: Alcohol dehydrogenase-related 31 kDa protein (202 aa).

11–34 is an NAD(+) binding site; it reads YVADCGGIALETSKVLMTKNIAKL. Substrate is bound at residue S139. Residue Y152 is the Proton acceptor of the active site.

The protein belongs to the short-chain dehydrogenases/reductases (SDR) family.

This chain is Alcohol dehydrogenase-related 31 kDa protein (Adhr), found in Drosophila erecta (Fruit fly).